Consider the following 410-residue polypeptide: Arginine deiminase (410 aa).

Cys-399 functions as the Amidino-cysteine intermediate in the catalytic mechanism.

It belongs to the arginine deiminase family.

It localises to the cytoplasm. The catalysed reaction is L-arginine + H2O = L-citrulline + NH4(+). Its pathway is amino-acid degradation; L-arginine degradation via ADI pathway; carbamoyl phosphate from L-arginine: step 1/2. The sequence is that of Arginine deiminase from Listeria monocytogenes serotype 4b (strain F2365).